Consider the following 88-residue polypeptide: Large ribosomal subunit protein bL27 (88 aa).

Residues 1 to 13 show a composition bias toward polar residues; it reads MATKKGASSSSNG. Positions 1 to 25 are disordered; it reads MATKKGASSSSNGRDSEAKRLGVKR.

This sequence belongs to the bacterial ribosomal protein bL27 family.

This chain is Large ribosomal subunit protein bL27, found in Corynebacterium efficiens (strain DSM 44549 / YS-314 / AJ 12310 / JCM 11189 / NBRC 100395).